Reading from the N-terminus, the 527-residue chain is MRSEKSALVFLLLQLFCVGCGFCGKVLVWPCDMSHWLNVKVILEELIVRGHEVTVLTHSKSLLIDYRKPSALKFEVVHMPQDKTEGNEVFVDLALNVLPGLPTWQSVIKLNDFFVEIRGTLKMMCESFIYNQTLMKKLQETNYDVMLIDPVIPCGDLMAELLAVPFVLTLRISLGGNMERSCGKLPAPLSYVPVPMTGLTDRMTFLERVKNSMLSVFFHFWIQDYDYHFWEEFYSKALGRPTTLCETVGKAEIWLIRTYWDFEFPQPYQPNFEFVGGLHCKPAKALPKEMENFVQSSGEDGIVVFSLGSLFQNVTEEKANIIASALAQIPQKVLWRYKGKKPSTLGTNTRLYDWIPQNDLLGHPKTKAFITHGGMNGIYEAIYHGVPMVGVPIFGDQLDNIAHMKAKGAAVEINFKTMTSEDLLRALRTVTTNSSYKENAMRLSRIHHDQPVKPLDRAVFWIEFVMRHKGAKHLRSAAHNLTWFQHYSIDVIGFLLACVATAIFLFTKCCLFSCQKFNKTRKIEKRE.

The N-terminal stretch at 1–23 is a signal peptide; that stretch reads MRSEKSALVFLLLQLFCVGCGFC. Residues 24 to 486 lie on the Extracellular side of the membrane; that stretch reads GKVLVWPCDM…AAHNLTWFQH (463 aa). N-linked (GlcNAc...) asparagine glycosylation is present at N313. A helical membrane pass occupies residues 487 to 507; sequence YSIDVIGFLLACVATAIFLFT. Residues 508-523 are Cytoplasmic-facing; that stretch reads KCCLFSCQKFNKTRKI.

This sequence belongs to the UDP-glycosyltransferase family.

It localises to the membrane. It catalyses the reaction glucuronate acceptor + UDP-alpha-D-glucuronate = acceptor beta-D-glucuronoside + UDP + H(+). In terms of biological role, UDP-glucuronosyltransferases catalyze phase II biotransformation reactions in which lipophilic substrates are conjugated with glucuronic acid to increase water solubility and enhance excretion. They are of major importance in the conjugation and subsequent elimination of potentially toxic xenobiotics and endogenous compounds. This chain is UDP-glucuronosyltransferase 2A3 (UGT2A3), found in Pongo abelii (Sumatran orangutan).